Reading from the N-terminus, the 342-residue chain is MPAAALLDDFLAFTLAGDAPAERDGACAGGAVRWQWLGDGLLAFEPAATDAAARASVLVSAGVHGDETAPIELLSMLARDLVAGALPLACRLLVVLGNVPAMRAGERYLDDDLNRLFSGRHAQVPASREAPRAAQLEAAASAFFGAAPAGSARWHIDMHTAIRASVFEQFALLPHTGTPPTRAMVEWLGDARIAAVLLHTAKGNTYSHFTAEHCGALACTLELGKVRPFGQNDLTRFAPADRAVRKLVSGGRAEGGATLPRVFTVIDQITKQSDALELFVAADVANFTAFTRGTVLAQDGDYRYTVKHDEERIVFPNPTVKPGLRAGLLVVDTTRDTLAALV.

Residues histidine 64, glutamate 67, and histidine 159 each coordinate Zn(2+). Glutamate 222 is an active-site residue.

Belongs to the AspA/AstE family. Succinylglutamate desuccinylase subfamily. It depends on Zn(2+) as a cofactor.

It carries out the reaction N-succinyl-L-glutamate + H2O = L-glutamate + succinate. The protein operates within amino-acid degradation; L-arginine degradation via AST pathway; L-glutamate and succinate from L-arginine: step 5/5. Transforms N(2)-succinylglutamate into succinate and glutamate. This Burkholderia orbicola (strain AU 1054) protein is Succinylglutamate desuccinylase.